An 830-amino-acid polypeptide reads, in one-letter code: MGCLLILLLTLICFSLRLCLATDVITFSSEFRDSETVVSNHSTFRFGFFSPVNSTGRYAGIWFNNIPVQTVVWVANSNSPINDSSGMVSISKEGNLVVMDGRGQVHWSTNVLVPVAANTFYARLLNTGNLVLLGTTNTGDEILWESFEHPQNIYLPTMSLATDTKTGRSLKLRSWKSPFDPSPGRYSAGLIPLPFPELVVWKDDLLMWRSGPWNGQYFIGLPNMDYRINLFELTLSSDNRGSVSMSYAGNTLLYHFLLDSEGSVFQRDWNVAIQEWKTWLKVPSTKCDTYATCGQFASCRFNPGSTPPCMCIRGFKPQSYAEWNNGNWTQGCVRKAPLQCESRDNNDGSRKSDGFVRVQKMKVPHNPQRSGANEQDCPESCLKNCSCTAYSFDRGIGCLLWSGNLMDMQEFSGTGVVFYIRLADSEFKKRTNRSIVITVTLLVGAFLFAGTVVLALWKIAKHREKNRNTRLLNERMEALSSNDVGAILVNQYKLKELPLFEFQVLAVATNNFSITNKLGQGGFGAVYKGRLQEGLDIAVKRLSRTSGQGVEEFVNEVVVISKLQHRNLVRLLGFCIEGEERMLVYEFMPENCLDAYLFDPVKQRLLDWKTRFNIIDGICRGLMYLHRDSRLKIIHRDLKASNILLDENLNPKISDFGLARIFQGNEDEVSTVRVVGTYGYMAPEYAMGGLFSEKSDVFSLGVILLEIVSGRRNSSFYNDGQNPNLSAYAWKLWNTGEDIALVDPVIFEECFENEIRRCVHVGLLCVQDHANDRPSVATVIWMLSSENSNLPEPKQPAFIPRRGTSEVESSGQSDPRASINNVSLTKITGR.

Positions 1-21 (MGCLLILLLTLICFSLRLCLA) are cleaved as a signal peptide. Residues 22–145 (TDVITFSSEF…TNTGDEILWE (124 aa)) form the Bulb-type lectin domain. Residues 22–434 (TDVITFSSEF…SEFKKRTNRS (413 aa)) are Extracellular-facing. N-linked (GlcNAc...) asparagine glycans are attached at residues Asn-40, Asn-53, and Asn-82. An EGF-like; atypical domain is found at 283-321 (PSTKCDTYATCGQFASCRFNPGSTPPCMCIRGFKPQSYA). 2 disulfide bridges follow: Cys-287–Cys-299 and Cys-293–Cys-309. Asn-327, Asn-384, and Asn-432 each carry an N-linked (GlcNAc...) asparagine glycan. Positions 340–423 (CESRDNNDGS…TGVVFYIRLA (84 aa)) constitute a PAN domain. 2 disulfides stabilise this stretch: Cys-377/Cys-398 and Cys-381/Cys-387. Residues 435 to 455 (IVITVTLLVGAFLFAGTVVLA) form a helical membrane-spanning segment. Residues 456 to 830 (LWKIAKHREK…NVSLTKITGR (375 aa)) are Cytoplasmic-facing. Residues 512 to 798 (FSITNKLGQG…NLPEPKQPAF (287 aa)) form the Protein kinase domain. Residues 518–526 (LGQGGFGAV) and Lys-540 each bind ATP. Phosphothreonine is present on Thr-545. Phosphoserine is present on residues Ser-546 and Ser-561. The interval 601 to 618 (VKQRLLDWKTRFNIIDGI) is caM-binding. Catalysis depends on Asp-637, which acts as the Proton acceptor. Phosphoserine occurs at positions 641, 654, and 670. Thr-671 carries the phosphothreonine modification. Phosphoserine occurs at positions 714, 715, 726, 805, 809, 810, 813, 818, and 823. The segment at 789–830 (NLPEPKQPAFIPRRGTSEVESSGQSDPRASINNVSLTKITGR) is disordered. Positions 806 to 830 (EVESSGQSDPRASINNVSLTKITGR) are enriched in polar residues. 2 positions are modified to phosphothreonine: Thr-825 and Thr-828.

The protein belongs to the protein kinase superfamily. Ser/Thr protein kinase family. In terms of assembly, interacts with PUB9, PUB13 and PUB14. Binds to calmodulin (CaM) in a Ca(2+)-dependent manner. Autophosphorylated. In terms of tissue distribution, mostly expressed in rosette leaves, and, to a lower extent, in cauline leaves and stems.

It is found in the cell membrane. It carries out the reaction L-seryl-[protein] + ATP = O-phospho-L-seryl-[protein] + ADP + H(+). The enzyme catalyses L-threonyl-[protein] + ATP = O-phospho-L-threonyl-[protein] + ADP + H(+). In terms of biological role, receptor-like serine/threonine-protein kinase that represses the disease resistance signaling pathway triggered in response to bacterial pathogen such as Pseudomonas syringae pv. tomato. The protein is G-type lectin S-receptor-like serine/threonine-protein kinase SD1-13 (SD113) of Arabidopsis thaliana (Mouse-ear cress).